We begin with the raw amino-acid sequence, 42 residues long: Cytochrome b559 subunit beta (42 aa).

The chain crosses the membrane as a helical span at residues 17–33 (WLTIHALAVPTVFFLGA). Histidine 21 contributes to the heme binding site.

This sequence belongs to the PsbE/PsbF family. As to quaternary structure, heterodimer of an alpha subunit and a beta subunit. PSII is composed of 1 copy each of membrane proteins PsbA, PsbB, PsbC, PsbD, PsbE, PsbF, PsbH, PsbI, PsbJ, PsbK, PsbL, PsbM, PsbT, PsbX, PsbY, PsbZ, Psb30/Ycf12, at least 3 peripheral proteins of the oxygen-evolving complex and a large number of cofactors. It forms dimeric complexes. Heme b is required as a cofactor.

It is found in the plastid. The protein localises to the chloroplast thylakoid membrane. Functionally, this b-type cytochrome is tightly associated with the reaction center of photosystem II (PSII). PSII is a light-driven water:plastoquinone oxidoreductase that uses light energy to abstract electrons from H(2)O, generating O(2) and a proton gradient subsequently used for ATP formation. It consists of a core antenna complex that captures photons, and an electron transfer chain that converts photonic excitation into a charge separation. This is Cytochrome b559 subunit beta from Emiliania huxleyi (Coccolithophore).